The primary structure comprises 296 residues: MKNEKIVVLYGGDSPEREVSLKSGKAVLDSLISQGYDAVGVDASGKELVAKLLELKPDKCFVALHGEDGENGRVSALLEMLEIKHTSSSMKSSVITMDKMISKEILMHHRMPTPMAKFLTDKLVAEDEISFPVAVKPSSGGSSIATFKVKSIQELKHAYEEASKYGEVMIEQWVTGKEITVAIVNDEVYSSVWIEPQNEFYDYESKYSGKSIYHSPSGLCEQKELEVRQLAKKAYDLLGCSGHARVDFIYDDRGNFYIMEINSSPGMTENSLSPKSAAAEGVDFDSFVKRIIEQAQ.

An ATP-grasp domain is found at lysine 103 to glutamate 293. ATP is bound at residue isoleucine 129–threonine 180. 3 residues coordinate Mg(2+): aspartate 247, glutamate 260, and asparagine 262.

It belongs to the D-alanine--D-alanine ligase family. The cofactor is Mg(2+). Mn(2+) serves as cofactor.

The protein resides in the cytoplasm. The catalysed reaction is 2 D-alanine + ATP = D-alanyl-D-alanine + ADP + phosphate + H(+). It functions in the pathway cell wall biogenesis; peptidoglycan biosynthesis. Functionally, cell wall formation. In Francisella tularensis subsp. novicida (strain U112), this protein is D-alanine--D-alanine ligase.